Here is a 459-residue protein sequence, read N- to C-terminus: Inositol-trisphosphate 3-kinase A (459 aa).

Residues 1–29 (MTLPGRPTGMARPRGAGPCSPGLERAPRR) are disordered. 3 positions are modified to omega-N-methylarginine: Arg-35, Arg-55, and Arg-62. Positions 49 to 164 (AAAGEPRARG…TSEDVGQKSH (116 aa)) are disordered. Low complexity predominate over residues 116-132 (RRLSTSSLSSTGSSSLL). A phosphoserine mark is found at Ser-135 and Ser-195. Residues Ser-195, Lys-207, 247–249 (QDL), and Asp-260 contribute to the ATP site. Substrate-binding residues include Lys-262 and Arg-283. A calmodulin-binding region spans residues 285–293 (DMYKKMLAV). 310–317 (KPRYMQWR) lines the substrate pocket. ATP contacts are provided by Lys-334 and Asp-414. A substrate-binding site is contributed by Lys-417.

Belongs to the inositol phosphokinase (IPK) family.

It is found in the cytoplasm. The protein localises to the cytoskeleton. The catalysed reaction is 1D-myo-inositol 1,4,5-trisphosphate + ATP = 1D-myo-inositol 1,3,4,5-tetrakisphosphate + ADP + H(+). With respect to regulation, activated by calcium/calmodulin. In terms of biological role, catalyzes the phosphorylation of 1D-myo-inositol 1,4,5-trisphosphate (InsP3) into 1D-myo-inositol 1,3,4,5-tetrakisphosphate and participates to the regulation of calcium homeostasis. In Mus musculus (Mouse), this protein is Inositol-trisphosphate 3-kinase A.